A 113-amino-acid chain; its full sequence is Coat protein TP1 (113 aa).

Its subcellular location is the virion. This is Coat protein TP1 from Thermoproteus tenax virus 1 (strain KRA1) (TTV1).